A 105-amino-acid polypeptide reads, in one-letter code: Large ribosomal subunit protein eL36 (105 aa).

The protein belongs to the eukaryotic ribosomal protein eL36 family. As to quaternary structure, component of the large ribosomal subunit.

Its subcellular location is the cytoplasm. It is found in the cytosol. Functionally, component of the large ribosomal subunit. The ribosome is a large ribonucleoprotein complex responsible for the synthesis of proteins in the cell. The chain is Large ribosomal subunit protein eL36 (rpl36) from Xenopus laevis (African clawed frog).